The following is a 681-amino-acid chain: Type VI secretion system spike protein VgrG2 (681 aa).

Residues 284–309 (AVAGSGKSNSSALQPGQTFSLTEHPN) are disordered. Over residues 289-309 (GKSNSSALQPGQTFSLTEHPN) the composition is skewed to polar residues.

The protein belongs to the VgrG protein family.

Part of the type VI secretion system specialized secretion system, which delivers several virulence factors in both prokaryotic and eukaryotic cells during infection. Plays an essential role in bacterial mobility and biofilm formation. The polypeptide is Type VI secretion system spike protein VgrG2 (Aeromonas hydrophila).